We begin with the raw amino-acid sequence, 359 residues long: Peptide chain release factor 1 (359 aa).

Position 235 is an N5-methylglutamine (Gln235). The disordered stretch occupies residues 283-305 (QKAESERSASRKTQVGSGDRSER).

This sequence belongs to the prokaryotic/mitochondrial release factor family. Methylated by PrmC. Methylation increases the termination efficiency of RF1.

It is found in the cytoplasm. In terms of biological role, peptide chain release factor 1 directs the termination of translation in response to the peptide chain termination codons UAG and UAA. The sequence is that of Peptide chain release factor 1 from Bartonella bacilliformis (strain ATCC 35685 / KC583 / Herrer 020/F12,63).